The chain runs to 134 residues: Small ribosomal subunit protein uS12 (134 aa).

The interval 1-30 is disordered; that stretch reads MPTINQLVKHGREKVKEKSKSPALQGHPQK. At Asp89 the chain carries 3-methylthioaspartic acid. A disordered region spans residues 106-134; sequence GVENRRQSRSKYGAKRPKAGAAAGAKGKK. A compositionally biased stretch (basic residues) spans 112–123; sequence QSRSKYGAKRPK. Over residues 124-134 the composition is skewed to low complexity; the sequence is AGAAAGAKGKK.

This sequence belongs to the universal ribosomal protein uS12 family. As to quaternary structure, part of the 30S ribosomal subunit. Contacts proteins S8 and S17. May interact with IF1 in the 30S initiation complex.

Functionally, with S4 and S5 plays an important role in translational accuracy. Interacts with and stabilizes bases of the 16S rRNA that are involved in tRNA selection in the A site and with the mRNA backbone. Located at the interface of the 30S and 50S subunits, it traverses the body of the 30S subunit contacting proteins on the other side and probably holding the rRNA structure together. The combined cluster of proteins S8, S12 and S17 appears to hold together the shoulder and platform of the 30S subunit. This chain is Small ribosomal subunit protein uS12, found in Fervidobacterium nodosum (strain ATCC 35602 / DSM 5306 / Rt17-B1).